A 220-amino-acid chain; its full sequence is Translation initiation factor 6 (220 aa).

Belongs to the eIF-6 family.

In terms of biological role, binds to the 50S ribosomal subunit and prevents its association with the 30S ribosomal subunit to form the 70S initiation complex. This Pyrobaculum arsenaticum (strain DSM 13514 / JCM 11321 / PZ6) protein is Translation initiation factor 6.